The following is a 286-amino-acid chain: Oxidase hkm6 (286 aa).

Cu cation contacts are provided by His16, His25, and His215.

This sequence belongs to the tyrosinase family. Cu(2+) is required as a cofactor.

It functions in the pathway secondary metabolite biosynthesis. In terms of biological role, oxidase; part of the gene cluster that mediates the biosynthesis of hancockiamides, an unusual new family of N-cinnamoylated piperazines. The NRPS hkm10 and the NmrA-like reductase hkm9 are proposed to convert two molecules of L-Phe to the intermediary piperazine called xenocockiamide A. Xenocockiamide A is then converted to hancockiamide D via a series of hydroxylations and O-methylations. The tyrosinase hkm6 may catalyze an aromatic hydroxylation, then the 2-oxoglutarate-dependent Fe(II) dioxygenase hkm4 and the FAD-dependent phenol hydroxylase hkm7 may catalyze consecutive hydroxylations to install 2 more hydroxy groups, and the methyltransferase hkm8 probably catalyzes two methylations using 2 molecules of S-adenosyl-L-methionine (SAM). The NRPS hkm11 activates and transfers trans-cinnamate supplied by the PAL hkm12 to hancockiamide D and produces hancockiamide A. NRPS Hkm11 has the flexibility to tolerate the bulky hancockiamide G as a substrate and the absence of the acetyl-transferase hkm3 opens up the opportunity for hkm11 to introduce a second N-cinnamoyl moiety. The cytochrome P450 monooxygenase hkm5 catalyzes the methylenedioxy bridge formation, converting hancockiamide A into hancockiamide G. Hkm5 can also convert hancockiamide B into hancockiamide C, and hancockiamide D into hancockiamide H. The N-acetyltransferase hkm3 finally transfers an acetyl group to 1-N of piperazine, converting hancockiamide A into hancockiamide B and hancockiamide G into hancockiamide C. In Aspergillus hancockii, this protein is Oxidase hkm6.